The chain runs to 178 residues: ADP-ribosylation factor-like protein 5 (178 aa).

Gly-2 carries N-myristoyl glycine lipidation. Residues 24 to 31 (GLDNAGKT), 67 to 71 (DIGGQ), and 126 to 129 (NKQD) each bind GTP.

It belongs to the small GTPase superfamily. Arf family.

Its subcellular location is the golgi apparatus. Functionally, GTP-binding protein that may be involved in protein trafficking; may modulate vesicle budding and uncoating within the Golgi apparatus. Plays a role in the shedding of pathogen spores from intestinal cells. The polypeptide is ADP-ribosylation factor-like protein 5 (arl-5) (Caenorhabditis elegans).